Consider the following 98-residue polypeptide: NADH-ubiquinone oxidoreductase chain 4L (98 aa).

Helical transmembrane passes span 1 to 21, 29 to 49, and 59 to 79; these read MTLI…GFLM, ALLC…LTVL, and MPII…ALLV.

This sequence belongs to the complex I subunit 4L family. As to quaternary structure, core subunit of respiratory chain NADH dehydrogenase (Complex I) which is composed of 45 different subunits.

It is found in the mitochondrion inner membrane. It carries out the reaction a ubiquinone + NADH + 5 H(+)(in) = a ubiquinol + NAD(+) + 4 H(+)(out). Core subunit of the mitochondrial membrane respiratory chain NADH dehydrogenase (Complex I) which catalyzes electron transfer from NADH through the respiratory chain, using ubiquinone as an electron acceptor. Part of the enzyme membrane arm which is embedded in the lipid bilayer and involved in proton translocation. The protein is NADH-ubiquinone oxidoreductase chain 4L (MT-ND4L) of Inia geoffrensis (Amazon river dolphin).